Reading from the N-terminus, the 48-residue chain is Probable antitoxin PhoAT (48 aa).

Belongs to the PhoAT antitoxin family. In terms of assembly, interacts with toxin PhoH2.

Functionally, probable antitoxin component of a type II toxin-antitoxin (TA) system. The probable cognate antitoxin is PhoAT; the toxin gene can be expressed in the absence of the antitoxin gene in M.smegmatis strain mc(2)155. The polypeptide is Probable antitoxin PhoAT (Mycolicibacterium smegmatis (strain ATCC 700084 / mc(2)155) (Mycobacterium smegmatis)).